Consider the following 540-residue polypeptide: DM7 family protein GM11956 (540 aa).

A disordered region spans residues 416-443 (ATDTRGRDEIRTSCDQPQEKDEGSAEAD). Residues 417-443 (TDTRGRDEIRTSCDQPQEKDEGSAEAD) show a composition bias toward basic and acidic residues.

The protein belongs to the DM7 family.

This is DM7 family protein GM11956 from Drosophila sechellia (Fruit fly).